We begin with the raw amino-acid sequence, 303 residues long: Cell division protein ZipA (303 aa).

Topologically, residues 1–6 (MMQDLR) are periplasmic. Residues 7–27 (LILIIVGAIAIIALLLHGLWT) form a helical membrane-spanning segment. At 28–303 (SRKERSSLFR…RIRSTLGVQV (276 aa)) the chain is on the cytoplasmic side. 3 disordered regions span residues 39-61 (RPVK…DEAF), 66-85 (KPYA…EPAI), and 124-159 (EQEP…GEKE). Basic and acidic residues-rich tracts occupy residues 75–85 (SHQEYKAEPAI) and 139–159 (ESER…GEKE).

Belongs to the ZipA family. Interacts with FtsZ via their C-terminal domains.

Its subcellular location is the cell inner membrane. Functionally, essential cell division protein that stabilizes the FtsZ protofilaments by cross-linking them and that serves as a cytoplasmic membrane anchor for the Z ring. Also required for the recruitment to the septal ring of downstream cell division proteins. This Photorhabdus laumondii subsp. laumondii (strain DSM 15139 / CIP 105565 / TT01) (Photorhabdus luminescens subsp. laumondii) protein is Cell division protein ZipA.